A 250-amino-acid chain; its full sequence is UPF0736 protein BPUM_1067 (250 aa).

This sequence belongs to the UPF0736 family.

The protein is UPF0736 protein BPUM_1067 of Bacillus pumilus (strain SAFR-032).